Here is a 144-residue protein sequence, read N- to C-terminus: Large ribosomal subunit protein uL15 (144 aa).

The tract at residues 1–58 is disordered; it reads MHLNTLSPAPGSHKARKRCGRGIGSGIGKTGGRGHKGQKSRSGGSVRPGFEGGQMPLK. Residues 21–31 show a composition bias toward gly residues; it reads RGIGSGIGKTG.

The protein belongs to the universal ribosomal protein uL15 family. As to quaternary structure, part of the 50S ribosomal subunit.

In terms of biological role, binds to the 23S rRNA. In Colwellia psychrerythraea (strain 34H / ATCC BAA-681) (Vibrio psychroerythus), this protein is Large ribosomal subunit protein uL15.